Reading from the N-terminus, the 135-residue chain is Small ribosomal subunit protein uS9 (135 aa).

The segment at 96–135 is disordered; that stretch reads SADNRKPLKTEGHLSRDPRAKERRKYGLKKARKAPQFSKR. Residues 97–115 are compositionally biased toward basic and acidic residues; the sequence is ADNRKPLKTEGHLSRDPRA. Basic residues predominate over residues 116–135; it reads KERRKYGLKKARKAPQFSKR.

Belongs to the universal ribosomal protein uS9 family.

The chain is Small ribosomal subunit protein uS9 from Prochlorococcus marinus (strain MIT 9313).